The following is a 262-amino-acid chain: Small ribosomal subunit protein uS2 (262 aa).

Belongs to the universal ribosomal protein uS2 family.

The sequence is that of Small ribosomal subunit protein uS2 from Borrelia garinii subsp. bavariensis (strain ATCC BAA-2496 / DSM 23469 / PBi) (Borreliella bavariensis).